A 240-amino-acid chain; its full sequence is Dihydromonapterin reductase (240 aa).

Tyr152 acts as the Proton acceptor in catalysis.

This sequence belongs to the short-chain dehydrogenases/reductases (SDR) family. FolM subfamily.

It catalyses the reaction (6S)-5,6,7,8-tetrahydrofolate + NADP(+) = 7,8-dihydrofolate + NADPH + H(+). The catalysed reaction is 7,8-dihydromonapterin + NADPH + H(+) = 5,6,7,8-tetrahydromonapterin + NADP(+). Catalyzes the reduction of dihydromonapterin to tetrahydromonapterin. Also has lower activity with dihydrofolate. This chain is Dihydromonapterin reductase (folM), found in Escherichia coli O139:H28 (strain E24377A / ETEC).